Consider the following 323-residue polypeptide: MADVDKLNIDSIIQRLLEVRGSKPGKNVQLQENEIRGLCLKSREIFLSQPILLELEAPLKICGDIHGQYYDLLRLFEYGGFPPESNYLFLGDYVDRGKQSLETICLLLAYKIKYPENFFLLRGNHECASINRIYGFYDECKRRYNIKLWKTFTDCFNCLPIAAIVDEKIFCCHGGLSPDLQSMEQIRRIMRPTDVPDQGLLCDLLWSDPDKDVLGWGENDRGVSFTFGAEVVAKFLHKHDLDLICRAHQVVEDGYEFFAKRQLVTLFSAPNYCGEFDNAGAMMSVDETLMCSFQILKPAEKKKPNASRPVTPPRGMITKQAKK.

Mn(2+)-binding residues include D64, H66, D92, and N124. H125 functions as the Proton donor in the catalytic mechanism. 2 residues coordinate Mn(2+): H173 and H248. A disordered region spans residues 300–323; the sequence is EKKKPNASRPVTPPRGMITKQAKK.

It belongs to the PPP phosphatase family. PP-1 subfamily. PP1 comprises a catalytic subunit, ppp1c1, ppp1cb or ppp1cc, which is folded into its native form by inhibitor 2 and glycogen synthetase kinase 3, and then is complexed to one or several targeting or regulatory subunits. Mn(2+) serves as cofactor.

The protein localises to the cytoplasm. It localises to the nucleus. Its subcellular location is the cleavage furrow. It is found in the nucleolus. The protein resides in the nucleoplasm. The protein localises to the chromosome. It localises to the centromere. Its subcellular location is the kinetochore. It is found in the nucleus speckle. The protein resides in the midbody. The protein localises to the mitochondrion. It localises to the cytoskeleton. Its subcellular location is the microtubule organizing center. It catalyses the reaction O-phospho-L-seryl-[protein] + H2O = L-seryl-[protein] + phosphate. It carries out the reaction O-phospho-L-threonyl-[protein] + H2O = L-threonyl-[protein] + phosphate. Its function is as follows. Protein phosphatase 1 (PP1) is essential for cell division, and participates in the regulation of glycogen metabolism, muscle contractility and protein synthesis. Promotes nuclear envelope reassembly by targeting nuclear membrane vesicles to chromatin at the end of mitosis. Acts by dephosphorylating membrane proteins such as lamin B receptor (lbr) to regulate the binding of membrane proteins to chromatin. The sequence is that of Serine/threonine-protein phosphatase PP1-gamma catalytic subunit from Xenopus tropicalis (Western clawed frog).